We begin with the raw amino-acid sequence, 293 residues long: uncharacterized protein (293 aa).

Residues 1 to 22 are disordered; it reads MTFNEGVQIDTSTTSTSGSGGG. Residues 25 to 45 traverse the membrane as a helical segment; the sequence is LAIGGGLGGLLVVVVAMLLGV. Positions 243-265 are disordered; sequence GDDRIQQQTTGRTNPETWTHGSA. Residues 248-265 show a composition bias toward polar residues; the sequence is QQQTTGRTNPETWTHGSA.

The protein resides in the membrane. This is an uncharacterized protein from Mycobacterium tuberculosis (strain CDC 1551 / Oshkosh).